The chain runs to 202 residues: Protein-methionine-sulfoxide reductase heme-binding subunit MsrQ (202 aa).

Helical transmembrane passes span Leu8–Phe28, Leu42–Leu62, Leu75–Leu95, Pro110–Asn130, Leu147–Leu167, and Glu169–Ala189.

Belongs to the MsrQ family. As to quaternary structure, heterodimer of a catalytic subunit (MsrP) and a heme-binding subunit (MsrQ). FMN serves as cofactor. Heme b is required as a cofactor.

It is found in the cell inner membrane. Functionally, part of the MsrPQ system that repairs oxidized periplasmic proteins containing methionine sulfoxide residues (Met-O), using respiratory chain electrons. Thus protects these proteins from oxidative-stress damage caused by reactive species of oxygen and chlorine generated by the host defense mechanisms. MsrPQ is essential for the maintenance of envelope integrity under bleach stress, rescuing a wide series of structurally unrelated periplasmic proteins from methionine oxidation. MsrQ provides electrons for reduction to the reductase catalytic subunit MsrP, using the quinone pool of the respiratory chain. The sequence is that of Protein-methionine-sulfoxide reductase heme-binding subunit MsrQ from Pseudomonas aeruginosa (strain ATCC 15692 / DSM 22644 / CIP 104116 / JCM 14847 / LMG 12228 / 1C / PRS 101 / PAO1).